The sequence spans 472 residues: Mothers against decapentaplegic homolog 1 (472 aa).

The 125-residue stretch at 12–136 folds into the MH1 domain; that stretch reads PAVKRLLGWK…YKRVDSPVLP (125 aa). Zn(2+)-binding residues include Cys64, Cys109, Cys121, and His126. The disordered stretch occupies residues 158–238; that stretch reads NPLHQTEPPM…PPPAYMPPEE (81 aa). Positions 169-182 are enriched in polar residues; the sequence is QNATFPDSFPQQPA. Residues 188–226 are compositionally biased toward low complexity; sequence TPNSPTNSYPSSPNSGTGSTATFPHSPSSSDPGSPFQMP. The segment covering 227-238 has biased composition (pro residues); the sequence is ETPPPAYMPPEE. An MH2 domain is found at 278–472; that stretch reads WCSIVYYELN…SPHNPISSVS (195 aa).

This sequence belongs to the dwarfin/SMAD family. May form trimers with another Smad1 and the co-Smad Smad4.

The protein resides in the cytoplasm. It localises to the nucleus. Involved in ventralization. May mediate Bmp2b signaling during embryonic dorsal-ventral pattern formation, and may itself be a transcriptional target for Smad5-mediated Bmp2b signaling. The chain is Mothers against decapentaplegic homolog 1 (smad1) from Danio rerio (Zebrafish).